A 122-amino-acid chain; its full sequence is Small ribosomal subunit protein uS13 (122 aa).

A disordered region spans residues G95 to K122.

It belongs to the universal ribosomal protein uS13 family. Part of the 30S ribosomal subunit. Forms a loose heterodimer with protein S19. Forms two bridges to the 50S subunit in the 70S ribosome.

Its function is as follows. Located at the top of the head of the 30S subunit, it contacts several helices of the 16S rRNA. In the 70S ribosome it contacts the 23S rRNA (bridge B1a) and protein L5 of the 50S subunit (bridge B1b), connecting the 2 subunits; these bridges are implicated in subunit movement. Contacts the tRNAs in the A and P-sites. This Nitratidesulfovibrio vulgaris (strain ATCC 29579 / DSM 644 / CCUG 34227 / NCIMB 8303 / VKM B-1760 / Hildenborough) (Desulfovibrio vulgaris) protein is Small ribosomal subunit protein uS13.